Here is a 62-residue protein sequence, read N- to C-terminus: Metallothionein-4 (62 aa).

A divalent metal cation-binding residues include C6, C8, C14, C16, C20, C22, C25, C27, C30, C34, C35, C37, C38, C42, C45, C49, C51, C58, C60, and C61.

This sequence belongs to the metallothionein superfamily. Type 1 family.

Its function is as follows. Seems to bind zinc and copper. Could play a special role in regulating zinc metabolism during the differentiation of stratified epithelia. In Canis lupus familiaris (Dog), this protein is Metallothionein-4 (MT4).